The following is a 239-amino-acid chain: Ribosomal RNA small subunit methyltransferase G (239 aa).

S-adenosyl-L-methionine contacts are provided by residues glycine 77, phenylalanine 82, 128–129, and arginine 146; that span reads AE. The segment at 217–239 is disordered; the sequence is RRQTSKKYPRKPGTPNKSPLVES.

This sequence belongs to the methyltransferase superfamily. RNA methyltransferase RsmG family.

The protein resides in the cytoplasm. Specifically methylates the N7 position of guanine in position 535 of 16S rRNA. In Staphylococcus epidermidis (strain ATCC 12228 / FDA PCI 1200), this protein is Ribosomal RNA small subunit methyltransferase G.